A 471-amino-acid chain; its full sequence is Cytidine and dCMP deaminase domain-containing protein 1 (471 aa).

A disordered region spans residues 1-27 (MAESNSWRSHRESDGNRSIPNGDDARN). CMP/dCMP-type deaminase domains lie at 57-153 (LWME…LLSE) and 312-460 (GVIR…KLNG). The Zn(2+) site is built by His-99, Cys-124, Cys-127, and His-393. Glu-395 serves as the catalytic Proton donor. Residues Cys-421 and Cys-424 each contribute to the Zn(2+) site.

It belongs to the cytidine and deoxycytidylate deaminase family. Zn(2+) serves as cofactor.

The enzyme catalyses 2'-deoxycytidine + H2O + H(+) = 2'-deoxyuridine + NH4(+). The catalysed reaction is cytidine + H2O + H(+) = uridine + NH4(+). In terms of biological role, catalyzes the deamination of cytidine and deoxycytidine into uridine and deoxyuridine, respectively. The chain is Cytidine and dCMP deaminase domain-containing protein 1 (cdadc1) from Danio rerio (Zebrafish).